Reading from the N-terminus, the 188-residue chain is Elongation factor P (188 aa).

An N6-(3,6-diaminohexanoyl)-5-hydroxylysine modification is found at K34.

It belongs to the elongation factor P family. In terms of processing, may be beta-lysylated on the epsilon-amino group of Lys-34 by the combined action of EpmA and EpmB, and then hydroxylated on the C5 position of the same residue by EpmC (if this protein is present). Lysylation is critical for the stimulatory effect of EF-P on peptide-bond formation. The lysylation moiety may extend toward the peptidyltransferase center and stabilize the terminal 3-CCA end of the tRNA. Hydroxylation of the C5 position on Lys-34 may allow additional potential stabilizing hydrogen-bond interactions with the P-tRNA.

It localises to the cytoplasm. It functions in the pathway protein biosynthesis; polypeptide chain elongation. In terms of biological role, involved in peptide bond synthesis. Alleviates ribosome stalling that occurs when 3 or more consecutive Pro residues or the sequence PPG is present in a protein, possibly by augmenting the peptidyl transferase activity of the ribosome. Modification of Lys-34 is required for alleviation. The protein is Elongation factor P of Xanthomonas campestris pv. campestris (strain B100).